The sequence spans 147 residues: D-aminoacyl-tRNA deacylase (147 aa).

Residues glycine 139–proline 140 carry the Gly-cisPro motif, important for rejection of L-amino acids motif.

It belongs to the DTD family. Homodimer.

The protein resides in the cytoplasm. It catalyses the reaction glycyl-tRNA(Ala) + H2O = tRNA(Ala) + glycine + H(+). It carries out the reaction a D-aminoacyl-tRNA + H2O = a tRNA + a D-alpha-amino acid + H(+). Its function is as follows. An aminoacyl-tRNA editing enzyme that deacylates mischarged D-aminoacyl-tRNAs. Also deacylates mischarged glycyl-tRNA(Ala), protecting cells against glycine mischarging by AlaRS. Acts via tRNA-based rather than protein-based catalysis; rejects L-amino acids rather than detecting D-amino acids in the active site. By recycling D-aminoacyl-tRNA to D-amino acids and free tRNA molecules, this enzyme counteracts the toxicity associated with the formation of D-aminoacyl-tRNA entities in vivo and helps enforce protein L-homochirality. The protein is D-aminoacyl-tRNA deacylase of Rippkaea orientalis (strain PCC 8801 / RF-1) (Cyanothece sp. (strain PCC 8801)).